Reading from the N-terminus, the 113-residue chain is Small ribosomal subunit protein mS41 (113 aa).

The transit peptide at 1-22 (MLILKRIFIIRNFIFPFSNCRY) directs the protein to the mitochondrion.

Belongs to the mitochondrion-specific ribosomal protein mS41 family. In terms of assembly, component of the mitochondrial small ribosomal subunit (mt-SSU). Mature yeast 74S mitochondrial ribosomes consist of a small (37S) and a large (54S) subunit. The 37S small subunit contains a 15S ribosomal RNA (15S mt-rRNA) and at least 32 different proteins. The 54S large subunit contains a 21S rRNA (21S mt-rRNA) and at least 45 different proteins.

It is found in the mitochondrion. Component of the mitochondrial ribosome (mitoribosome), a dedicated translation machinery responsible for the synthesis of mitochondrial genome-encoded proteins, including at least some of the essential transmembrane subunits of the mitochondrial respiratory chain. The mitoribosomes are attached to the mitochondrial inner membrane and translation products are cotranslationally integrated into the membrane. mS41 is involved in telomere length regulation. This Schizosaccharomyces pombe (strain 972 / ATCC 24843) (Fission yeast) protein is Small ribosomal subunit protein mS41 (fyv4).